Reading from the N-terminus, the 41-residue chain is U15-myrmicitoxin-Tb1b (41 aa).

Positions 1-25 (MKIVKLITIFAMIATLMVTVTNGEA) are cleaved as a signal peptide. H40 bears the Histidine amide mark.

Expressed by the venom gland.

The protein resides in the secreted. Its function is as follows. Venom protein with unknown function. Does not induce paralysis when a high dose is administered by intrathoracic injection into the blowfly Lucilia caesar. The polypeptide is U15-myrmicitoxin-Tb1b (Tetramorium bicarinatum (Tramp ant)).